The chain runs to 79 residues: Small ribosomal subunit protein bS18 (79 aa).

The protein belongs to the bacterial ribosomal protein bS18 family. In terms of assembly, part of the 30S ribosomal subunit. Forms a tight heterodimer with protein bS6.

In terms of biological role, binds as a heterodimer with protein bS6 to the central domain of the 16S rRNA, where it helps stabilize the platform of the 30S subunit. This is Small ribosomal subunit protein bS18 from Bacillus velezensis (strain DSM 23117 / BGSC 10A6 / LMG 26770 / FZB42) (Bacillus amyloliquefaciens subsp. plantarum).